The chain runs to 546 residues: MKSHHQSHSSTSSKAHDSASCSQSQGGFSQPQGTPSQLHELSQYQGSSSSSTGTVPSSSQSSHSSSGTLSSLETVSTQELCSIPEDQEPEEPGPAPWARLWALQDGFSNLDCVNDNYWFGRDKSCEYCFDGPLLRRTDKYRTYSKKHFRIFREMGPKNCYIVYIEDHSGNGTFVNTELIGKGKRCPLSNNSEIALSLCRNKVFVFFDLTVDDQSVYPKELRDEYIMSKTLGSGACGEVKMAFERKTCQKVAIKIISKRRFALGSSREADTAPSVETEIEILKKLNHPCIIKIKDVFDAEDYYIVLELMEGGELFDRVVGNKRLKEATCKLYFYQMLVAVQYLHENGIIHRDLKPENVLLSSQEEDCLIKITDFGQSKILGETSLMRTLCGTPTYLAPEVLVSNGTAGYSRAVDCWSLGVILFICLSGYPPFSEHKTQVSLKDQITSGKYNFIPEVWTDVSEEALDLVKKLLVVDPKARLTTEEALNHPWLQDEYMKKKFQDLLVQEKNSVTLPVAPAQTSSQKRPLELEVEGMPSTKRLSVCGAVL.

The interval 1–70 is disordered; it reads MKSHHQSHSS…SSHSSSGTLS (70 aa). A compositionally biased stretch (low complexity) spans 8 to 70; that stretch reads HSSTSSKAHD…SSHSSSGTLS (63 aa). Thr68 is subject to Phosphothreonine; by MAP3K20. Residue Ser71 is modified to Phosphoserine; by PLK3. Thr77 bears the Phosphothreonine; by ATM and MAP3K20 mark. Position 82 is a phosphoserine; by PLK3 (Ser82). Residues 117-179 form the FHA domain; that stretch reads YWFGRDKSCE…NGTFVNTELI (63 aa). Positions 224 to 490 constitute a Protein kinase domain; sequence YIMSKTLGSG…TEEALNHPWL (267 aa). ATP contacts are provided by residues 231–238, Lys253, and 306–312; these read GSGACGEV and ELMEGGE. Asp351 functions as the Proton acceptor in the catalytic mechanism. ATP-binding positions include 355 to 356 and Asp372; that span reads EN. Residues 372–398 are T-loop/activation segment; it reads DFGQSKILGETSLMRTLCGTPTYLAPE. A Phosphoserine; by autocatalysis modification is found at Ser383. Phosphothreonine; by autocatalysis is present on residues Thr387 and Thr391. The residue at position 460 (Ser460) is a Phosphoserine.

The protein belongs to the protein kinase superfamily. CAMK Ser/Thr protein kinase family. CHK2 subfamily. Homodimer. Homodimerization is part of the activation process but the dimer may dissociate following activation. Interacts with PML. Interacts with TP53. Interacts with RB1; phosphorylates RB1. Interacts with BRCA1. Interacts (phosphorylated at Thr-68) with MDC1; requires ATM-mediated phosphorylation of CHEK2. Interacts with TP53BP1; modulates CHEK2 phosphorylation at Thr-68 in response to ionizing radiation. Interacts with CDC25A; phosphorylates CDC25A and mediates its degradation in response to ionizing radiation. Interacts with CUL1; mediates CHEK2 ubiquitination and regulation. Interacts with CDKN2AIP. Interacts (via protein kinase domain) with CCAR2 (via N-terminus). Interacts with SIRT1. The cofactor is Mg(2+). Phosphorylated. Phosphorylated at Ser-82 by PLK3 in response to DNA damage, promoting phosphorylation at Thr-77 by ATM and the G2/M transition checkpoint. Phosphorylation at Thr-77 induces homodimerization. Autophosphorylates at Thr-387 and Thr-391 in the T-loop/activation segment upon dimerization to become fully active. DNA damage-induced autophosphorylation at Ser-383 induces CUL1-mediated ubiquitination and regulates the pro-apoptotic function. Phosphorylation at Ser-460 also regulates ubiquitination. Phosphorylated by PLK4. Post-translationally, ubiquitinated. CUL1-mediated ubiquitination regulates the pro-apoptotic function. Ubiquitination may also regulate protein stability. Ubiquitinated by RNF8 via 'Lys-48'-linked ubiquitination. Ubiquitously expressed with higher levels in the thymus, spleen and colon (at protein level).

The protein localises to the nucleus. Its subcellular location is the PML body. It localises to the nucleoplasm. It catalyses the reaction L-seryl-[protein] + ATP = O-phospho-L-seryl-[protein] + ADP + H(+). It carries out the reaction L-threonyl-[protein] + ATP = O-phospho-L-threonyl-[protein] + ADP + H(+). With respect to regulation, activated through phosphorylation at Thr-68 by ATM in response to DNA double-strand breaks. Activation is modulated by several mediators including MDC1 and TP53BP1. Induces homodimerization with exchange of the T-loop/activation segment between protomers and transphosphorylation of the protomers. The autophosphorylated kinase dimer is fully active. Negatively regulated by PPM1D through dephosphorylation of Thr-68. Serine/threonine-protein kinase which is required for checkpoint-mediated cell cycle arrest, activation of DNA repair and apoptosis in response to the presence of DNA double-strand breaks. May also negatively regulate cell cycle progression during unperturbed cell cycles. Following activation, phosphorylates numerous effectors preferentially at the consensus sequence [L-X-R-X-X-S/T]. Regulates cell cycle checkpoint arrest through phosphorylation of CDC25A, CDC25B and CDC25C, inhibiting their activity. Inhibition of CDC25 phosphatase activity leads to increased inhibitory tyrosine phosphorylation of CDK-cyclin complexes and blocks cell cycle progression. May also phosphorylate NEK6 which is involved in G2/M cell cycle arrest. Regulates DNA repair through phosphorylation of BRCA2, enhancing the association of RAD51 with chromatin which promotes DNA repair by homologous recombination. Also stimulates the transcription of genes involved in DNA repair (including BRCA2) through the phosphorylation and activation of the transcription factor FOXM1. Regulates apoptosis through the phosphorylation of p53/TP53, MDM4 and PML. Phosphorylation of p53/TP53 at 'Ser-20' by CHEK2 may alleviate inhibition by MDM2, leading to accumulation of active p53/TP53. Phosphorylation of MDM4 may also reduce degradation of p53/TP53. Also controls the transcription of pro-apoptotic genes through phosphorylation of the transcription factor E2F1. Tumor suppressor, it may also have a DNA damage-independent function in mitotic spindle assembly by phosphorylating BRCA1. Its absence may be a cause of the chromosomal instability observed in some cancer cells. Promotes the CCAR2-SIRT1 association and is required for CCAR2-mediated SIRT1 inhibition. Under oxidative stress, promotes ATG7 ubiquitination by phosphorylating the E3 ubiquitin ligase TRIM32 at 'Ser-56' leading to positive regulation of the autophagosme assembly. This chain is Serine/threonine-protein kinase Chk2, found in Mus musculus (Mouse).